Reading from the N-terminus, the 105-residue chain is Co-chaperonin GroES (105 aa).

The protein belongs to the GroES chaperonin family. In terms of assembly, heptamer of 7 subunits arranged in a ring. Interacts with the chaperonin GroEL.

Its subcellular location is the cytoplasm. Its function is as follows. Together with the chaperonin GroEL, plays an essential role in assisting protein folding. The GroEL-GroES system forms a nano-cage that allows encapsulation of the non-native substrate proteins and provides a physical environment optimized to promote and accelerate protein folding. GroES binds to the apical surface of the GroEL ring, thereby capping the opening of the GroEL channel. The chain is Co-chaperonin GroES from Parvibaculum lavamentivorans (strain DS-1 / DSM 13023 / NCIMB 13966).